A 209-amino-acid chain; its full sequence is C-type lectin domain family 6 member A (209 aa).

At 1-20 the chain is on the cytoplasmic side; that stretch reads MVQERQSQGKGVCWTLRLWS. Residues 21-43 traverse the membrane as a helical; Signal-anchor for type II membrane protein segment; sequence AAVISMLLLSTCFIASCVVTYQF. Topologically, residues 44-209 are extracellular; it reads IMDQPSRRLY…SICEMKKIYL (166 aa). Disulfide bonds link Cys64/Cys78, Cys79/Cys90, Cys107/Cys202, and Cys176/Cys194. The C-type lectin domain maps to 86-203; it reads FGSSCYLIST…CDSKHNSICE (118 aa). Val116, Asn118, and Glu122 together coordinate Ca(2+). A glycan (N-linked (GlcNAc...) asparagine) is linked at Asn131. 3 residues coordinate Ca(2+): Glu168, Asn170, and Glu174. Alpha-D-mannopyranose contacts are provided by residues 168–170, Glu174, Trp182, and 190–191; these read EPN and ND. Asn190, Asp191, and Glu203 together coordinate Ca(2+).

As to quaternary structure, associated with FCER1G. Heterodimer with CLEC4D; this heterodimer forms a pattern recognition receptor (PRR) against fungal infection. As to expression, expressed by the XS52 DC (dendritic cell) line (at protein level). Expressed constitutively by the epidermis, and skin resident DC appear to be the major source of this expression. Expressed in the spleen and thymus. Expression was undetectable in non-DC lines, including macrophage lines (J774 and Raw), T-cell lines (7-17, HDK-1, and D10), B-cell hybridoma (5C5), a keratinocyte line (Pam 212), and a fibroblast line (NS01).

It localises to the cell membrane. Functionally, calcium-dependent lectin that acts as a pattern recognition receptor (PRR) of the innate immune system: specifically recognizes and binds alpha-mannans on C.albicans hypheas. Binding of C.albicans alpha-mannans to this receptor complex leads to phosphorylation of the immunoreceptor tyrosine-based activation motif (ITAM) of FCER1G, triggering activation of SYK, CARD9 and NF-kappa-B, consequently driving maturation of antigen-presenting cells and shaping antigen-specific priming of T-cells toward effector T-helper 1 and T-helper 17 cell subtypes. Also recognizes, in a mannose-dependent manner, allergens from house dust mite and fungi, by promoting cysteinyl leukotriene production. Recognizes soluble elements from the eggs of Shistosoma mansoni altering adaptive immune responses. The chain is C-type lectin domain family 6 member A from Mus musculus (Mouse).